We begin with the raw amino-acid sequence, 513 residues long: Probable tubulin polyglutamylase ttll-15 (513 aa).

Residues 73-411 (VTGSYESAHT…STPITKEADI (339 aa)) enclose the TTL domain. Residues 216 to 219 (QKFV), K229, and D231 contribute to the ATP site.

Belongs to the tubulin--tyrosine ligase family. In terms of tissue distribution, expressed in hypodermis and pharyngeal muscles.

Probable polyglutamylase that forms polyglutamate side chains on tubulin. Probably acts when complexed with other proteins. Appears to be dispensable for polar spindle formation in dividing embryonic cells, for cilia-dependent osmotic avoidance and for male mating behavior. Regulates microtubule dynamics in uterine muscle cells. The sequence is that of Probable tubulin polyglutamylase ttll-15 from Caenorhabditis elegans.